Consider the following 142-residue polypeptide: MFQGASALSLDAKGRMSIPSRHREALQQQAEGRVTLTKHPDGCLLLFPRPEWETFRTRIAALPMDAHWWKRIFLGNAADVEMDGAGRVLIAPELRSAAMLDKEVMLLGMGSHFEVWDAATYAAKEQQAMAQGMPEALKNFSF.

SpoVT-AbrB domains are found at residues 5-51 and 77-120; these read ASAL…PRPE and AADV…DAAT.

It belongs to the MraZ family. In terms of assembly, forms oligomers.

It localises to the cytoplasm. It is found in the nucleoid. This chain is Transcriptional regulator MraZ, found in Cupriavidus taiwanensis (strain DSM 17343 / BCRC 17206 / CCUG 44338 / CIP 107171 / LMG 19424 / R1) (Ralstonia taiwanensis (strain LMG 19424)).